We begin with the raw amino-acid sequence, 347 residues long: NADH-quinone oxidoreductase subunit H (347 aa).

9 helical membrane-spanning segments follow: residues 22–42, 59–79, 93–113, 124–144, 171–191, 198–218, 240–260, 285–305, and 321–341; these read GVVS…TAYL, PSLA…KLVF, FIIA…VIPI, IGGI…IIIA, MALS…IQIV, PIWL…SILA, VEYS…NMIL, IPGY…FLWI, and GLKV…AILV.

The protein belongs to the complex I subunit 1 family. NDH-1 is composed of 14 different subunits. Subunits NuoA, H, J, K, L, M, N constitute the membrane sector of the complex.

It is found in the cell inner membrane. It catalyses the reaction a quinone + NADH + 5 H(+)(in) = a quinol + NAD(+) + 4 H(+)(out). Functionally, NDH-1 shuttles electrons from NADH, via FMN and iron-sulfur (Fe-S) centers, to quinones in the respiratory chain. The immediate electron acceptor for the enzyme in this species is believed to be ubiquinone. Couples the redox reaction to proton translocation (for every two electrons transferred, four hydrogen ions are translocated across the cytoplasmic membrane), and thus conserves the redox energy in a proton gradient. This subunit may bind ubiquinone. This is NADH-quinone oxidoreductase subunit H from Orientia tsutsugamushi (strain Ikeda) (Rickettsia tsutsugamushi).